We begin with the raw amino-acid sequence, 453 residues long: Bifunctional protein GlmU (453 aa).

The segment at 1–231 is pyrophosphorylase; sequence MERTCLAVIL…EIEMTGCNTR (231 aa). Residues 10-13, K24, Q77, 82-83, 105-107, G143, E157, N172, and N229 contribute to the UDP-N-acetyl-alpha-D-glucosamine site; these read LAAG, GT, and YGD. D107 is a binding site for Mg(2+). N229 is a Mg(2+) binding site. The tract at residues 232 to 252 is linker; sequence AELAVIERFWQERRRHQLMLS. Residues 253–453 are N-acetyltransferase; it reads GVTMIAPETV…ATKAAKKAKG (201 aa). The UDP-N-acetyl-alpha-D-glucosamine site is built by R318 and K336. The active-site Proton acceptor is the H348. 2 residues coordinate UDP-N-acetyl-alpha-D-glucosamine: Y351 and N362. Acetyl-CoA contacts are provided by residues A365, 371 to 372, S390, S408, and R425; that span reads NY.

This sequence in the N-terminal section; belongs to the N-acetylglucosamine-1-phosphate uridyltransferase family. In the C-terminal section; belongs to the transferase hexapeptide repeat family. As to quaternary structure, homotrimer. Mg(2+) serves as cofactor.

The protein resides in the cytoplasm. It catalyses the reaction alpha-D-glucosamine 1-phosphate + acetyl-CoA = N-acetyl-alpha-D-glucosamine 1-phosphate + CoA + H(+). It carries out the reaction N-acetyl-alpha-D-glucosamine 1-phosphate + UTP + H(+) = UDP-N-acetyl-alpha-D-glucosamine + diphosphate. The protein operates within nucleotide-sugar biosynthesis; UDP-N-acetyl-alpha-D-glucosamine biosynthesis; N-acetyl-alpha-D-glucosamine 1-phosphate from alpha-D-glucosamine 6-phosphate (route II): step 2/2. Its pathway is nucleotide-sugar biosynthesis; UDP-N-acetyl-alpha-D-glucosamine biosynthesis; UDP-N-acetyl-alpha-D-glucosamine from N-acetyl-alpha-D-glucosamine 1-phosphate: step 1/1. It functions in the pathway bacterial outer membrane biogenesis; LPS lipid A biosynthesis. Functionally, catalyzes the last two sequential reactions in the de novo biosynthetic pathway for UDP-N-acetylglucosamine (UDP-GlcNAc). The C-terminal domain catalyzes the transfer of acetyl group from acetyl coenzyme A to glucosamine-1-phosphate (GlcN-1-P) to produce N-acetylglucosamine-1-phosphate (GlcNAc-1-P), which is converted into UDP-GlcNAc by the transfer of uridine 5-monophosphate (from uridine 5-triphosphate), a reaction catalyzed by the N-terminal domain. This Rhizobium leguminosarum bv. trifolii (strain WSM2304) protein is Bifunctional protein GlmU.